A 35-amino-acid chain; its full sequence is Conotoxin Cal6.1d (35 aa).

A propeptide spanning residues 1–8 (GLTRPSKR) is cleaved from the precursor. Intrachain disulfides connect Cys9–Cys25, Cys16–Cys29, and Cys24–Cys34.

This sequence belongs to the conotoxin O1 superfamily. As to expression, expressed by the venom duct.

It localises to the secreted. Probable neurotoxin with unknown target. Possibly targets ion channels. The protein is Conotoxin Cal6.1d of Californiconus californicus (California cone).